Reading from the N-terminus, the 415-residue chain is Amino acid decarboxylase lolD2 (415 aa).

Lysine 62 is subject to N6-(pyridoxal phosphate)lysine. Pyridoxal 5'-phosphate contacts are provided by residues serine 194, glycine 231, and 266–269 (EPGT). Substrate is bound at residue 315–316 (IV). Cysteine 351 serves as the catalytic Proton donor; shared with dimeric partner. The residue at position 351 (cysteine 351) is an S-nitrosocysteine. Aspartate 352 is a substrate binding site. Residue tyrosine 381 participates in pyridoxal 5'-phosphate binding.

The protein belongs to the Orn/Lys/Arg decarboxylase class-II family. As to quaternary structure, homodimer. Requires pyridoxal 5'-phosphate as cofactor.

It functions in the pathway alkaloid biosynthesis. Functionally, amino acid decarboxylase; part of the gene cluster that mediates the biosynthesis of loline alkaloids, potent insecticidal agents composed of a pyrrolizidine ring system and an uncommon ether bridge linking carbons 2 and 7. Lolines are structurally differentiated by the various modifications of the L-amino group and include norloline, loline, N-methylloline, N-acetylloline, N-acetylnorloline, and N-formylloline. The first committed step is the condensation of O-acetyl-L-homoserine (derived from L-aspartic acid) and L-proline, probably catalyzed by the gamma-type pyridoxal 5'-phosphate(PLP)-dependent enzyme lolC, to give the diamino diacid, NACPP. Ensuing cyclization, decarboxylation, and acetylation steps yield 1-exo-acetamidopyrrolizidine (AcAP). LolO is required for installation of the ether bridge upon the pathway intermediate, 1-exo-acetamidopyrrolizidine (AcAP). In sequential 2-oxoglutarate- and O(2)-consuming steps, lolO removes hydrogens from C2 and C7 of AcAP to form both carbon-oxygen bonds in N-acetylnorloline (NANL), the precursor to all other lolines. The enzymes lolD, lolE, lolF and lolT have also been proposed to be involved in the ether-bridge installation. Further processing of the exocyclic moiety of NANL by fungal N-acetamidase (LolN), methyltransferase (LolM), and cytochrome P450 (LolP) enzymes, with occasional involvement of a plant acetyltransferase, generates the other known lolines. LolN transforms NANL to norlonine which is monomethylated and dimethylated to respectively lonine and N-methyllonine (NML) by lolM. LolP catalyzes hydroxylation of the methyl group in N-methylloline (NML) and further oxygenation to N-formylloline (NFL). A plant acetyltransferase is responsible for the acetylation of loline to form N-acetylloline (NAL). LolA might interact with aspartate kinase to prevent feedback inhibition of its activity by these end products and thereby promote production of L-homoserine from L-aspartate. The chain is Amino acid decarboxylase lolD2 from Epichloe uncinata (Endophyte fungus).